The chain runs to 116 residues: Iron-sulfur cluster insertion protein ErpA (116 aa).

Cys-44, Cys-108, and Cys-110 together coordinate iron-sulfur cluster.

The protein belongs to the HesB/IscA family. Homodimer. The cofactor is iron-sulfur cluster.

In terms of biological role, required for insertion of 4Fe-4S clusters for at least IspG. In Aeromonas salmonicida (strain A449), this protein is Iron-sulfur cluster insertion protein ErpA.